A 262-amino-acid chain; its full sequence is 4-hydroxy-2-oxovalerate aldolase (262 aa).

Residue H48 is the Proton acceptor of the active site. Substrate is bound at residue Q149. Residue E151 coordinates Mg(2+). Positions 176 and 177 each coordinate substrate. Residue D177 coordinates Mg(2+).

The protein belongs to the HpcH/HpaI aldolase family.

The catalysed reaction is (S)-4-hydroxy-2-oxopentanoate = acetaldehyde + pyruvate. It functions in the pathway xenobiotic degradation; biphenyl degradation. Functionally, catalyzes the reversible retro-aldol cleavage of 4-hydroxy-2-oxovalerate to pyruvate and acetaldehyde. This chain is 4-hydroxy-2-oxovalerate aldolase (bphF), found in Novosphingobium aromaticivorans (Sphingomonas aromaticivorans).